The following is a 312-amino-acid chain: Holliday junction branch migration complex subunit RuvB (312 aa).

Positions 1–168 are large ATPase domain (RuvB-L); that stretch reads MKTNYEFRPQ…FGHIFHLNEY (168 aa). ATP contacts are provided by residues R8, G49, K52, T53, T54, 115 to 117, R158, Y168, and R206; that span reads EDF. T53 contacts Mg(2+). The segment at 169–234 is small ATPAse domain (RuvB-S); sequence EPSEISAIIL…DIKNIFKKIQ (66 aa). The tract at residues 237-312 is head domain (RuvB-H); the sequence is EFGLDEQDIN…DFLKNNQLIK (76 aa). 2 residues coordinate DNA: K290 and R295.

Belongs to the RuvB family. In terms of assembly, homohexamer. Forms an RuvA(8)-RuvB(12)-Holliday junction (HJ) complex. HJ DNA is sandwiched between 2 RuvA tetramers; dsDNA enters through RuvA and exits via RuvB. An RuvB hexamer assembles on each DNA strand where it exits the tetramer. Each RuvB hexamer is contacted by two RuvA subunits (via domain III) on 2 adjacent RuvB subunits; this complex drives branch migration. In the full resolvosome a probable DNA-RuvA(4)-RuvB(12)-RuvC(2) complex forms which resolves the HJ.

The protein localises to the cytoplasm. It catalyses the reaction ATP + H2O = ADP + phosphate + H(+). The RuvA-RuvB-RuvC complex processes Holliday junction (HJ) DNA during genetic recombination and DNA repair, while the RuvA-RuvB complex plays an important role in the rescue of blocked DNA replication forks via replication fork reversal (RFR). RuvA specifically binds to HJ cruciform DNA, conferring on it an open structure. The RuvB hexamer acts as an ATP-dependent pump, pulling dsDNA into and through the RuvAB complex. RuvB forms 2 homohexamers on either side of HJ DNA bound by 1 or 2 RuvA tetramers; 4 subunits per hexamer contact DNA at a time. Coordinated motions by a converter formed by DNA-disengaged RuvB subunits stimulates ATP hydrolysis and nucleotide exchange. Immobilization of the converter enables RuvB to convert the ATP-contained energy into a lever motion, pulling 2 nucleotides of DNA out of the RuvA tetramer per ATP hydrolyzed, thus driving DNA branch migration. The RuvB motors rotate together with the DNA substrate, which together with the progressing nucleotide cycle form the mechanistic basis for DNA recombination by continuous HJ branch migration. Branch migration allows RuvC to scan DNA until it finds its consensus sequence, where it cleaves and resolves cruciform DNA. This is Holliday junction branch migration complex subunit RuvB from Ureaplasma parvum serovar 3 (strain ATCC 27815 / 27 / NCTC 11736).